Here is a 373-residue protein sequence, read N- to C-terminus: Flagellar P-ring protein (373 aa).

An N-terminal signal peptide occupies residues 1 to 28; sequence MPRVSTHLVKLAAAALCALLLSAVAASA.

Belongs to the FlgI family. In terms of assembly, the basal body constitutes a major portion of the flagellar organelle and consists of four rings (L,P,S, and M) mounted on a central rod.

The protein resides in the periplasm. It localises to the bacterial flagellum basal body. Assembles around the rod to form the L-ring and probably protects the motor/basal body from shearing forces during rotation. The polypeptide is Flagellar P-ring protein (Rhodopseudomonas palustris (strain ATCC BAA-98 / CGA009)).